We begin with the raw amino-acid sequence, 298 residues long: ATP synthase gamma chain (298 aa).

This sequence belongs to the ATPase gamma chain family. F-type ATPases have 2 components, CF(1) - the catalytic core - and CF(0) - the membrane proton channel. CF(1) has five subunits: alpha(3), beta(3), gamma(1), delta(1), epsilon(1). CF(0) has three main subunits: a, b and c.

The protein localises to the cell inner membrane. Functionally, produces ATP from ADP in the presence of a proton gradient across the membrane. The gamma chain is believed to be important in regulating ATPase activity and the flow of protons through the CF(0) complex. The protein is ATP synthase gamma chain of Francisella tularensis subsp. holarctica (strain FTNF002-00 / FTA).